Here is a 342-residue protein sequence, read N- to C-terminus: Aromatic amino acid aminotransferase (342 aa).

K214 carries the N6-(pyridoxal phosphate)lysine modification.

The protein belongs to the class-II pyridoxal-phosphate-dependent aminotransferase family. Homodimer. It depends on pyridoxal 5'-phosphate as a cofactor.

It catalyses the reaction an aromatic L-alpha-amino acid + 2-oxoglutarate = an aromatic oxo-acid + L-glutamate. Its function is as follows. Aminotransferase that catalyzes the conversion of aromatic amino acids and 2-oxoglutarate into corresponding aromatic oxo acids and L-glutamate. This chain is Aromatic amino acid aminotransferase, found in Corynebacterium efficiens (strain DSM 44549 / YS-314 / AJ 12310 / JCM 11189 / NBRC 100395).